An 83-amino-acid polypeptide reads, in one-letter code: uncharacterized protein (83 aa).

A disordered region spans residues 57–83 (ESVEEEEEFEDYDEFEEEEEYYYDDEY).

This is an uncharacterized protein from Archaeoglobus fulgidus (strain ATCC 49558 / DSM 4304 / JCM 9628 / NBRC 100126 / VC-16).